The primary structure comprises 463 residues: Homoserine O-acetyltransferase FUB5 (463 aa).

The AB hydrolase-1 domain occupies 113 to 436 (NVMIICHALS…VSDDGHDAFL (324 aa)). Catalysis depends on Ser-211, which acts as the Nucleophile. Positions 296–312 (RFGRDTGSKKKTQKQES) are enriched in basic and acidic residues. The interval 296–331 (RFGRDTGSKKKTQKQESKTLPSNSTPIHSHSGADET) is disordered. Catalysis depends on residues Asp-403 and His-432.

Belongs to the AB hydrolase superfamily. MetX family.

The catalysed reaction is L-homoserine + acetyl-CoA = O-acetyl-L-homoserine + CoA. It functions in the pathway mycotoxin biosynthesis. Its function is as follows. Homoserine O-acetyltransferase; part of the gene cluster that mediates the biosynthesis of fusaric acid, a mycotoxin with low to moderate toxicity to animals and humans, but with high phytotoxic properties. L-aspartate is suggested as fusaric acid amino acid precursor that is activated and further processed to O-acetyl-L-homoserine by cluster enzymes aspartate kinase FUB3 and homoserine O-acetyltransferase FUB5, as well as enzymes of the primary metabolism. The polyketide synthase (PKS) FUB1 generates the triketide trans-2-hexenal which is presumptively released by the hydrolase FUB4 and linked to the NRPS-bound amino acid precursor by NAD(P)-dependent dehydrogenase FUB6. FUB1, FUB4, and the non-canonical NRPS Fub8 may form an enzyme complex. Further processing of the NRPS-bound intermediate might be carried out by FUB6 and the sulfhydrylase FUB7, enabling a spontaneous electrocyclization to close the carbon backbone of fusaric acid. Dihydrofusaric acid is likely to be released via reduction by the thioester reductase (TR) domain of FUB8 whereupon the final oxidation to fusaric acid may (also) be performed by the FMN-dependent dehydrogenase FUB9. This Gibberella moniliformis (strain M3125 / FGSC 7600) (Maize ear and stalk rot fungus) protein is Homoserine O-acetyltransferase FUB5.